A 151-amino-acid chain; its full sequence is Small ribosomal subunit protein uS11 (151 aa).

Residues 129 to 151 (IEDVTPVPSDSTRRKGGRRGRRL) form a disordered region. Residues 142 to 151 (RKGGRRGRRL) show a composition bias toward basic residues.

This sequence belongs to the universal ribosomal protein uS11 family.

The chain is Small ribosomal subunit protein uS11 (RPS14) from Procambarus clarkii (Red swamp crayfish).